The following is a 397-amino-acid chain: N-acetyllactosaminide beta-1,3-N-acetylglucosaminyltransferase 2 (397 aa).

Residues methionine 1–arginine 7 are Cytoplasmic-facing. The chain crosses the membrane as a helical; Signal-anchor for type II membrane protein span at residues valine 8 to serine 28. The Lumenal segment spans residues lysine 29–arginine 325. N-linked (GlcNAc...) asparagine glycans are attached at residues asparagine 30, asparagine 79, asparagine 89, asparagine 127, asparagine 173, and asparagine 219.

Belongs to the glycosyltransferase 31 family. Interacts with B3GNT8; this interaction greatly increases B3GNT2 catalytic activity, independently of B3GNT8 enzymatic activity. Mn(2+) serves as cofactor. In terms of tissue distribution, expressed in heart, brain, lung, kidney and testis and, to a lesser extent, in liver and skeletal muscle. No expression in spleen.

It localises to the golgi apparatus membrane. It catalyses the reaction a beta-D-galactosyl-(1-&gt;4)-N-acetyl-beta-D-glucosaminyl derivative + UDP-N-acetyl-alpha-D-glucosamine = an N-acetyl-beta-D-glucosaminyl-(1-&gt;3)-beta-D-galactosyl-(1-&gt;4)-N-acetyl-beta-D-glucosaminyl derivative + UDP + H(+). It participates in protein modification; protein glycosylation. Functionally, beta-1,3-N-acetylglucosaminyltransferase involved in the synthesis of poly-N-acetyllactosamine. Catalyzes the initiation and elongation of poly-N-acetyllactosamine chains. Probably constitutes the main polylactosamine synthase. This Mus musculus (Mouse) protein is N-acetyllactosaminide beta-1,3-N-acetylglucosaminyltransferase 2 (B3GNT2).